Consider the following 123-residue polypeptide: Chondroitin proteoglycan 8 (123 aa).

Positions 1–16 are cleaved as a signal peptide; sequence MRPFILLALLFSVAIA. Residues 32–123 form a disordered region; the sequence is SVRRSTRGAD…SGSGDEAPAE (92 aa). Residues 38-60 are compositionally biased toward basic and acidic residues; sequence RGADKKADSSDSSDSNEKDDKVT. Ser-63 and Ser-65 each carry an O-linked (Xyl...) (chondroitin sulfate) serine glycan. Positions 74-84 are enriched in basic and acidic residues; it reads EQLRRVARDVE. Residues Ser-87, Ser-93, and Ser-114 are each glycosylated (O-linked (Xyl...) (chondroitin sulfate) serine).

The sequence is that of Chondroitin proteoglycan 8 (cpg-8) from Caenorhabditis briggsae.